Here is a 346-residue protein sequence, read N- to C-terminus: Patr class I histocompatibility antigen, CH28 alpha chain (346 aa).

The first 21 residues, 1–21, serve as a signal peptide directing secretion; it reads MAPRSLLLLFSGALALTETWA. Residues 22–111 are alpha-1; the sequence is GSHSLRYFST…LLRRYNQSEA (90 aa). The Extracellular portion of the chain corresponds to 22–305; the sequence is GSHSLRYFST…EQSPQPTIPI (284 aa). N-linked (GlcNAc...) asparagine glycosylation is present at N107. The tract at residues 112–203 is alpha-2; sequence GSHTLQGMNG…ENGKETLQRA (92 aa). 2 cysteine pairs are disulfide-bonded: C122–C185 and C224–C280. The segment at 204-295 is alpha-3; that stretch reads DPPKAHIAHH…GLPQPLTLRW (92 aa). One can recognise an Ig-like C1-type domain in the interval 206 to 294; sequence PKAHIAHHPI…EGLPQPLTLR (89 aa). Residues 296–305 form a connecting peptide region; it reads EQSPQPTIPI. Residues 306–329 form a helical membrane-spanning segment; that stretch reads VGIVAGLVVLGAVVTGAVVAAVMW. At 330–346 the chain is on the cytoplasmic side; that stretch reads RKKSSDRNRGSYSQAAV.

This sequence belongs to the MHC class I family. Heterodimer of an alpha chain and a beta chain (beta-2-microglobulin).

Its subcellular location is the membrane. Its function is as follows. Involved in the presentation of foreign antigens to the immune system. This Pan troglodytes (Chimpanzee) protein is Patr class I histocompatibility antigen, CH28 alpha chain.